A 137-amino-acid chain; its full sequence is Large ribosomal subunit protein uL16 (137 aa).

This sequence belongs to the universal ribosomal protein uL16 family. Part of the 50S ribosomal subunit.

In terms of biological role, binds 23S rRNA and is also seen to make contacts with the A and possibly P site tRNAs. The sequence is that of Large ribosomal subunit protein uL16 from Alkalilimnicola ehrlichii (strain ATCC BAA-1101 / DSM 17681 / MLHE-1).